The primary structure comprises 445 residues: Ubiquitin carboxyl-terminal hydrolase MINDY-3 (445 aa).

The active-site Nucleophile is C51. S125 is modified (phosphoserine). The active-site Proton acceptor is H287.

This sequence belongs to the MINDY deubiquitinase family. FAM188 subfamily. As to quaternary structure, interacts with COPS5. As to expression, widely expressed with high levels in heart, skeletal muscle, and kidney, and low levels in liver and brain. Also expressed in lung (at protein level).

It is found in the nucleus. The enzyme catalyses Thiol-dependent hydrolysis of ester, thioester, amide, peptide and isopeptide bonds formed by the C-terminal Gly of ubiquitin (a 76-residue protein attached to proteins as an intracellular targeting signal).. Functionally, hydrolase that can remove 'Lys-48'-linked conjugated ubiquitin from proteins. This chain is Ubiquitin carboxyl-terminal hydrolase MINDY-3, found in Homo sapiens (Human).